Here is a 393-residue protein sequence, read N- to C-terminus: Probable acetyl-CoA acyltransferase (393 aa).

Cys-88 serves as the catalytic Acyl-thioester intermediate. Residues His-349 and Cys-378 each act as proton acceptor in the active site.

Belongs to the thiolase-like superfamily. Thiolase family.

The protein resides in the cytoplasm. The enzyme catalyses 2 acetyl-CoA = acetoacetyl-CoA + CoA. The protein is Probable acetyl-CoA acyltransferase of Staphylococcus aureus (strain MRSA252).